Consider the following 247-residue polypeptide: tRNA pseudouridine synthase A (247 aa).

The active-site Nucleophile is aspartate 53. Tyrosine 111 lines the substrate pocket.

It belongs to the tRNA pseudouridine synthase TruA family. As to quaternary structure, homodimer.

The enzyme catalyses uridine(38/39/40) in tRNA = pseudouridine(38/39/40) in tRNA. Formation of pseudouridine at positions 38, 39 and 40 in the anticodon stem and loop of transfer RNAs. This chain is tRNA pseudouridine synthase A, found in Bacillus licheniformis (strain ATCC 14580 / DSM 13 / JCM 2505 / CCUG 7422 / NBRC 12200 / NCIMB 9375 / NCTC 10341 / NRRL NRS-1264 / Gibson 46).